The sequence spans 297 residues: Nitrogenase iron protein (297 aa).

11–18 (GKGGIGKS) is an ATP binding site. Cys99 is a [4Fe-4S] cluster binding site. Arg102 bears the ADP-ribosylarginine; by dinitrogenase reductase ADP-ribosyltransferase mark. [4Fe-4S] cluster is bound at residue Cys133.

This sequence belongs to the NifH/BchL/ChlL family. As to quaternary structure, homodimer. It depends on [4Fe-4S] cluster as a cofactor. The reversible ADP-ribosylation of Arg-102 inactivates the nitrogenase reductase and regulates nitrogenase activity.

The catalysed reaction is N2 + 8 reduced [2Fe-2S]-[ferredoxin] + 16 ATP + 16 H2O = H2 + 8 oxidized [2Fe-2S]-[ferredoxin] + 2 NH4(+) + 16 ADP + 16 phosphate + 6 H(+). The key enzymatic reactions in nitrogen fixation are catalyzed by the nitrogenase complex, which has 2 components: the iron protein and the molybdenum-iron protein. This is Nitrogenase iron protein (nifH) from Rhizobium meliloti (strain 1021) (Ensifer meliloti).